We begin with the raw amino-acid sequence, 301 residues long: Glycine--tRNA ligase alpha subunit (301 aa).

This sequence belongs to the class-II aminoacyl-tRNA synthetase family. In terms of assembly, tetramer of two alpha and two beta subunits.

It is found in the cytoplasm. It carries out the reaction tRNA(Gly) + glycine + ATP = glycyl-tRNA(Gly) + AMP + diphosphate. This chain is Glycine--tRNA ligase alpha subunit, found in Neisseria meningitidis serogroup C (strain 053442).